A 295-amino-acid chain; its full sequence is Aspartate carbamoyltransferase catalytic subunit (295 aa).

Carbamoyl phosphate-binding residues include Arg-54 and Thr-55. Lys-82 contributes to the L-aspartate binding site. Carbamoyl phosphate is bound by residues Arg-104, His-132, and Gln-135. Positions 165 and 218 each coordinate L-aspartate. Residues Gly-257 and Pro-258 each contribute to the carbamoyl phosphate site.

This sequence belongs to the aspartate/ornithine carbamoyltransferase superfamily. ATCase family. Heterododecamer (2C3:3R2) of six catalytic PyrB chains organized as two trimers (C3), and six regulatory PyrI chains organized as three dimers (R2).

The catalysed reaction is carbamoyl phosphate + L-aspartate = N-carbamoyl-L-aspartate + phosphate + H(+). The protein operates within pyrimidine metabolism; UMP biosynthesis via de novo pathway; (S)-dihydroorotate from bicarbonate: step 2/3. Catalyzes the condensation of carbamoyl phosphate and aspartate to form carbamoyl aspartate and inorganic phosphate, the committed step in the de novo pyrimidine nucleotide biosynthesis pathway. The sequence is that of Aspartate carbamoyltransferase catalytic subunit from Wolbachia pipientis wMel.